The primary structure comprises 506 residues: D-alanine--D-alanyl carrier protein ligase (506 aa).

152-153 (TS) contributes to the ATP binding site. A D-alanine-binding site is contributed by D197. 292–297 (NTYGPT) provides a ligand contact to ATP. V301 provides a ligand contact to D-alanine. Residues D383, 395-398 (YRGR), and K494 contribute to the ATP site. K494 lines the D-alanine pocket.

This sequence belongs to the ATP-dependent AMP-binding enzyme family. DltA subfamily.

It localises to the cytoplasm. The catalysed reaction is holo-[D-alanyl-carrier protein] + D-alanine + ATP = D-alanyl-[D-alanyl-carrier protein] + AMP + diphosphate. Its pathway is cell wall biogenesis; lipoteichoic acid biosynthesis. In terms of biological role, catalyzes the first step in the D-alanylation of lipoteichoic acid (LTA), the activation of D-alanine and its transfer onto the D-alanyl carrier protein (Dcp) DltC. In an ATP-dependent two-step reaction, forms a high energy D-alanyl-AMP intermediate, followed by transfer of the D-alanyl residue as a thiol ester to the phosphopantheinyl prosthetic group of the Dcp. D-alanylation of LTA plays an important role in modulating the properties of the cell wall in Gram-positive bacteria, influencing the net charge of the cell wall. This is D-alanine--D-alanyl carrier protein ligase from Lacticaseibacillus casei (strain BL23) (Lactobacillus casei).